Here is an 843-residue protein sequence, read N- to C-terminus: General transcription and DNA repair factor IIH helicase/translocase subunit XPB/SSL2 (843 aa).

Positions 1–85 (MTDVEGYQPK…TAADSSMNQM (85 aa)) are disordered. Positions 26–41 (SDEDSPATDAEIDENY) are enriched in acidic residues. Positions 42–56 (DDNRETSEGRGERDT) are enriched in basic and acidic residues. A compositionally biased stretch (basic residues) spans 64 to 74 (KKPRKKTKSSR). Residues 64-75 (KKPRKKTKSSRH) carry the Nuclear localization signal motif. In terms of domain architecture, Helicase ATP-binding spans 373-535 (MFGNGRARSG…DLNFLIGPKL (163 aa)). 386–393 (LPCGAGKT) contacts ATP. Positions 488-491 (DEVH) match the DEAH box motif. The Helicase C-terminal domain occupies 589-743 (QACQFLIQYH…KVITHLHGME (155 aa)). Residue Ser-752 is modified to Phosphoserine.

This sequence belongs to the helicase family. RAD25/XPB subfamily. As to quaternary structure, component of the 7-subunit TFIIH core complex composed of XPB/SSL2, XPD/RAD3, SSL1, TFB1, TFB2, TFB4 and TFB5, which is active in NER. The core complex associates with the 3-subunit CTD-kinase module TFIIK composed of CCL1, KIN28 and TFB3 to form the 10-subunit holoenzyme (holo-TFIIH) active in transcription. An additionnal subunit, TFB6, plays a role in the dissociation of the SSL2 helicase from TFIIH after transcription initiation. Interacts directly with TFB6. Mg(2+) is required as a cofactor.

It is found in the nucleus. The catalysed reaction is Couples ATP hydrolysis with the unwinding of duplex DNA by translocating in the 3'-5' direction.. It carries out the reaction ATP + H2O = ADP + phosphate + H(+). Functionally, ATP-dependent DNA translocase. Component of the general transcription and DNA repair factor IIH (TFIIH) core complex. When complexed to CDK-activating kinase (CAK), involved in RNA transcription by RNA polymerase II. May have 3'-5' helicase activity alone, the TFIIH core however has no 3'-5' helicase activity. Also involved in transcription-coupled nucleotide excision repair (NER) of damaged DNA. In NER, TFIIH acts by opening DNA around the lesion to allow the excision of the damaged oligonucleotide and its replacement by a new DNA fragment. The ATPase activity of XPB/SSL2, but not its helicase activity, is required for DNA opening. In transcription, TFIIH has an essential role in transcription initiation. When the pre-initiation complex (PIC) has been established, TFIIH is required for promoter opening and promoter escape. The ATP-dependent helicase activity of XPB/SSL2 is required for promoter opening and promoter escape. XPB/SSL2 acts as a double-stranded DNA translocase, promoting DNA opening by tracking in a 5'-3' dirction along the nontemplate promoter strand, rotating and inserting DNA into the Pol II active site cleft, leading to DNA unwinding. A dsDNA-stimulated ATPase, dATP and ATP are equally good substrates. May also use this translocase mechanism during DNA repair rather than physically wedging open damaged DNA. The sequence is that of General transcription and DNA repair factor IIH helicase/translocase subunit XPB/SSL2 from Saccharomyces cerevisiae (strain ATCC 204508 / S288c) (Baker's yeast).